A 372-amino-acid chain; its full sequence is Dof zinc finger protein DOF5.6 (372 aa).

The segment at 73-127 adopts a Dof-type zinc-finger fold; the sequence is QKCPRCESTHTKFCYYNNYSLSQPRYFCKTCRRYWTKGGTLRNIPVGGGCRKNKK. Zn(2+) is bound by residues C75, C78, C100, and C103. Positions 117-146 are disordered; that stretch reads PVGGGCRKNKKPSSSNSSSSTSSGKKPSNI. The span at 128 to 145 shows a compositional bias: low complexity; the sequence is PSSSNSSSSTSSGKKPSN.

The PEAR proteins (e.g. DOF2.4, DOF5.1, DOF3.2, DOF1.1, DOF5.6 and DOF5.3) form a short-range concentration gradient that peaks at protophloem sieve elements (PSE). Preferentially expressed in the vasculature of all organs, including seedlings, roots, stems, buds, leaves, flowers and siliques, and particularly in the cambium, phloem and interfascicular parenchyma cells of inflorescence stems.

It localises to the nucleus. Its function is as follows. Transcription factor that binds specifically to a 5'-AA[AG]G-3' consensus core sequence. Promotes expression. The PEAR proteins (e.g. DOF2.4, DOF5.1, DOF3.2, DOF1.1, DOF5.6 and DOF5.3) activate gene expression that promotes radial growth of protophloem sieve elements. Involved in the regulation of interfascicular cambium formation and vascular tissue development, particularly at a very early stage during inflorescence stem development; promotes both cambium activity and phloem specification, but prevents xylem specification. The polypeptide is Dof zinc finger protein DOF5.6 (Arabidopsis thaliana (Mouse-ear cress)).